The sequence spans 290 residues: S-adenosylmethionine-dependent nucleotide dehydratase (290 aa).

Residues S6–L226 enclose the Radical SAM core domain. Residues C22, C26, and C29 each contribute to the [4Fe-4S] cluster site.

It belongs to the radical SAM superfamily. Viperin family. [4Fe-4S] cluster serves as cofactor.

The catalysed reaction is UTP + AH2 + S-adenosyl-L-methionine = 3'-deoxy-3',4'-didehydro-UTP + 5'-deoxyadenosine + L-methionine + A + H2O + H(+). In terms of biological role, expression of pVip47 in E.coli (strain MG1655) confers resistance to phage P1; has no effect against T7. Catalyzes the conversion of uridine triphosphate (UTP) to 3'-deoxy-3',4'-didehydro-UTP (ddhUTP), probably via a SAM-dependent radical mechanism. The modified nucleotide represses transcription from T7 RNA polymerase-directed genes (possibly by acting as chain terminators), strongly suggesting these nucleotides block viral polymerase transcription. How this protein allows bacteria to resist viruses that do not encode their own RNA polymerase (such as lambda, P1) is unknown. The protein is S-adenosylmethionine-dependent nucleotide dehydratase of Flammeovirga pacifica.